A 914-amino-acid polypeptide reads, in one-letter code: Valine--tRNA ligase (914 aa).

Residues 47–57 (PYPTGELHMGH) carry the 'HIGH' region motif. Positions 552–556 (KMSKS) match the 'KMSKS' region motif. An ATP-binding site is contributed by Lys-555.

The protein belongs to the class-I aminoacyl-tRNA synthetase family. ValS type 2 subfamily.

It is found in the cytoplasm. The enzyme catalyses tRNA(Val) + L-valine + ATP = L-valyl-tRNA(Val) + AMP + diphosphate. In terms of biological role, catalyzes the attachment of valine to tRNA(Val). As ValRS can inadvertently accommodate and process structurally similar amino acids such as threonine, to avoid such errors, it has a 'posttransfer' editing activity that hydrolyzes mischarged Thr-tRNA(Val) in a tRNA-dependent manner. This is Valine--tRNA ligase from Methanopyrus kandleri (strain AV19 / DSM 6324 / JCM 9639 / NBRC 100938).